Reading from the N-terminus, the 288-residue chain is Shikimate dehydrogenase (NADP(+)) (288 aa).

Shikimate contacts are provided by residues 21-23 (SLS) and Thr68. The active-site Proton acceptor is the Lys72. Shikimate-binding residues include Asn93 and Asp108. Residues 132 to 136 (GNGGA) and Leu230 each bind NADP(+). Tyr232 contacts shikimate. An NADP(+)-binding site is contributed by Gly253.

This sequence belongs to the shikimate dehydrogenase family. As to quaternary structure, homodimer.

It carries out the reaction shikimate + NADP(+) = 3-dehydroshikimate + NADPH + H(+). It participates in metabolic intermediate biosynthesis; chorismate biosynthesis; chorismate from D-erythrose 4-phosphate and phosphoenolpyruvate: step 4/7. Involved in the biosynthesis of the chorismate, which leads to the biosynthesis of aromatic amino acids. Catalyzes the reversible NADPH linked reduction of 3-dehydroshikimate (DHSA) to yield shikimate (SA). This Crocosphaera subtropica (strain ATCC 51142 / BH68) (Cyanothece sp. (strain ATCC 51142)) protein is Shikimate dehydrogenase (NADP(+)).